Consider the following 60-residue polypeptide: Ribosome biogenesis protein Nop10 (60 aa).

The protein belongs to the NOP10 family.

Its function is as follows. Involved in ribosome biogenesis; more specifically in 18S rRNA pseudouridylation and in cleavage of pre-rRNA. This chain is Ribosome biogenesis protein Nop10, found in Haloquadratum walsbyi (strain DSM 16790 / HBSQ001).